The following is a 229-amino-acid chain: Transcriptional regulatory protein CreB (229 aa).

Positions Thr-5–Leu-119 constitute a Response regulatory domain. At Asp-54 the chain carries 4-aspartylphosphate. The ompR/PhoB-type DNA-binding region spans Ser-129–Gly-228.

Post-translationally, phosphorylated by CreC.

Its subcellular location is the cytoplasm. Member of the two-component regulatory system CreC/CreB involved in catabolic regulation. The protein is Transcriptional regulatory protein CreB (creB) of Escherichia coli (strain K12).